The following is a 254-amino-acid chain: H-2 class II histocompatibility antigen, I-E alpha chain (254 aa).

A signal peptide spans 1–24; it reads RSRALILGVLALTTMLSLCGGEDD. Positions 25–109 are alpha-1; sequence IEADHVAFYG…KDSNFTPAAN (85 aa). Over 25–216 the chain is Extracellular; it reads IEADHVAFYG…IPAPMSELTE (192 aa). Residues Asn103 and Asn143 are each glycosylated (N-linked (GlcNAc...) asparagine). Residues 110-203 are alpha-2; the sequence is EAPQATVFPK…GLEEPVLKHW (94 aa). The 93-residue stretch at 112–204 folds into the Ig-like C1-type domain; the sequence is PQATVFPKSP…LEEPVLKHWE (93 aa). Residues Cys132 and Cys188 are joined by a disulfide bond. Positions 204 to 216 are connecting peptide; sequence EPEIPAPMSELTE. A helical membrane pass occupies residues 217–242; it reads TVVCALGLSVGLVGIVVGTIFIIQGL. The Cytoplasmic segment spans residues 243–254; that stretch reads RSGGTSRHPGPL.

The protein belongs to the MHC class II family.

The protein resides in the membrane. In Mus musculus (Mouse), this protein is H-2 class II histocompatibility antigen, I-E alpha chain.